The chain runs to 345 residues: MKVAIIGATGYGGIELIRLLQQHPYFSIVSIHSFSQVGEHITSSYPHLRRFLVYTLQEIDVESIKKEADLVFLATPAGVSVKLTPLLLKAGLKVIDLSGDFRMVNPSIYEMWYKKPAASEEFLQQAVYGLSEWKRDEIQQAKLVANPGCFATATLLAIAPLMRNKIIEENSIIIDAKSGVSGAGKTPTHAAHFPELYDNLHIYKVNEHQHIPEIEQMLIGWNEQAKPITFSTHLIPVSRGIMVTLYAKIRKYVQIEELHNLYTNIYKNAYFVRIRPYGEFPSIKEVRGSNYCDIGIGYDERTKRITVVAVIDNMMKGAAGQAVQNANLVARLDEKTGLQYIPIYP.

C149 is an active-site residue.

This sequence belongs to the NAGSA dehydrogenase family. Type 1 subfamily.

The protein localises to the cytoplasm. The catalysed reaction is N-acetyl-L-glutamate 5-semialdehyde + phosphate + NADP(+) = N-acetyl-L-glutamyl 5-phosphate + NADPH + H(+). Its pathway is amino-acid biosynthesis; L-arginine biosynthesis; N(2)-acetyl-L-ornithine from L-glutamate: step 3/4. In terms of biological role, catalyzes the NADPH-dependent reduction of N-acetyl-5-glutamyl phosphate to yield N-acetyl-L-glutamate 5-semialdehyde. This chain is N-acetyl-gamma-glutamyl-phosphate reductase, found in Bacillus cytotoxicus (strain DSM 22905 / CIP 110041 / 391-98 / NVH 391-98).